Reading from the N-terminus, the 122-residue chain is Large ribosomal subunit protein uL14 (122 aa).

Belongs to the universal ribosomal protein uL14 family. Part of the 50S ribosomal subunit. Forms a cluster with proteins L3 and L19. In the 70S ribosome, L14 and L19 interact and together make contacts with the 16S rRNA in bridges B5 and B8.

Binds to 23S rRNA. Forms part of two intersubunit bridges in the 70S ribosome. The polypeptide is Large ribosomal subunit protein uL14 (Gloeothece citriformis (strain PCC 7424) (Cyanothece sp. (strain PCC 7424))).